A 507-amino-acid polypeptide reads, in one-letter code: Peroxisomal catalase (507 aa).

Active-site residues include histidine 65 and asparagine 138. Residue tyrosine 348 participates in heme binding. The short motif at 505-507 is the Microbody targeting signal element; it reads SKI.

The protein belongs to the catalase family. In terms of assembly, homotetramer. Heme is required as a cofactor.

It localises to the peroxisome matrix. The enzyme catalyses 2 H2O2 = O2 + 2 H2O. Its function is as follows. Catalyzes the degradation of hydrogen peroxide (H(2)O(2)) generated by peroxisomal oxidases to water and oxygen, thereby protecting cells from the toxic effects of hydrogen peroxide. This Pichia angusta (Yeast) protein is Peroxisomal catalase (PXP9).